A 314-amino-acid chain; its full sequence is tRNA dimethylallyltransferase (314 aa).

An ATP-binding site is contributed by 11–18; the sequence is GPTAVGKT. 13–18 is a binding site for substrate; the sequence is TAVGKT. An interaction with substrate tRNA region spans residues 36–39; it reads DSMQ.

Belongs to the IPP transferase family. In terms of assembly, monomer. Mg(2+) serves as cofactor.

The catalysed reaction is adenosine(37) in tRNA + dimethylallyl diphosphate = N(6)-dimethylallyladenosine(37) in tRNA + diphosphate. Catalyzes the transfer of a dimethylallyl group onto the adenine at position 37 in tRNAs that read codons beginning with uridine, leading to the formation of N6-(dimethylallyl)adenosine (i(6)A). The chain is tRNA dimethylallyltransferase from Bacillus anthracis.